The chain runs to 447 residues: ATP-dependent protease ATPase subunit HslU (447 aa).

ATP is bound by residues isoleucine 18, 60-65 (GVGKTE), aspartate 259, glutamate 325, and arginine 397.

Belongs to the ClpX chaperone family. HslU subfamily. As to quaternary structure, a double ring-shaped homohexamer of HslV is capped on each side by a ring-shaped HslU homohexamer. The assembly of the HslU/HslV complex is dependent on binding of ATP.

The protein localises to the cytoplasm. Its function is as follows. ATPase subunit of a proteasome-like degradation complex; this subunit has chaperone activity. The binding of ATP and its subsequent hydrolysis by HslU are essential for unfolding of protein substrates subsequently hydrolyzed by HslV. HslU recognizes the N-terminal part of its protein substrates and unfolds these before they are guided to HslV for hydrolysis. The protein is ATP-dependent protease ATPase subunit HslU of Burkholderia pseudomallei (strain 668).